Here is a 471-residue protein sequence, read N- to C-terminus: Ubiquitin carboxyl-terminal hydrolase calypso (471 aa).

The UCH catalytic domain maps to 45 to 276 (GWLELESDPG…IRFNLMAVVP (232 aa)). Cys-131 functions as the Nucleophile in the catalytic mechanism. His-213 (proton donor) is an active-site residue. The disordered stretch occupies residues 307–326 (DEQGESGNGDSQRPDTPTTL). Polar residues predominate over residues 314-326 (NGDSQRPDTPTTL). The ULD domain occupies 375–403 (NYDKFICTFLSMLAHQGVLGELVSQHLLP). The positively charged C-terminal tail required for binding nucleosomes stretch occupies residues 405 to 471 (KKVSGQGAAN…KGRNKCRKRK (67 aa)). The tract at residues 412-471 (AANRISKQSNTASAGGSTTGASASTPKTQQQQAAAAKNGKSPSKTPGRRRKGRNKCRKRK) is disordered. The segment covering 422-447 (TASAGGSTTGASASTPKTQQQQAAAA) has biased composition (low complexity). Residues 457 to 471 (PGRRRKGRNKCRKRK) are compositionally biased toward basic residues.

Belongs to the peptidase C12 family. BAP1 subfamily. As to quaternary structure, catalytic component of the polycomb repressive deubiquitinase (PR-DUB) complex, at least composed of caly/calypso, Asx and sba (MBD5/6 homolog). The PR-DUB complex associates with nucleosomes to mediate deubiquitination of histone H2AK118ub1 substrates; the association requires the positively charged C-terminal tail of caly, probably due to direct binding of DNA. Interacts (via ULD domain) with Asx (via DEUBAD domain); the interaction produces a stable heterodimer with a composite binding site for ubiquitin. Homodimerizes (via coiled-coil hinge-region between the UCH and ULD domains) to mediate assembly of 2 copies of the caly-Asx heterodimer into a bisymmetric tetramer; dimerization enhances PR-DUB association with nucleosomes.

It is found in the nucleus. The enzyme catalyses Thiol-dependent hydrolysis of ester, thioester, amide, peptide and isopeptide bonds formed by the C-terminal Gly of ubiquitin (a 76-residue protein attached to proteins as an intracellular targeting signal).. Functionally, catalytic component of the polycomb repressive deubiquitinase (PR-DUB) complex, a complex that specifically mediates deubiquitination of histone H2A monoubiquitinated at 'Lys-119' (H2AK118ub1). Mediates bisymmetric organization of the PR-DUB complex and is involved in association with nucleosomes to mediate deubiquitination. Does not deubiquitinate monoubiquitinated histone H2B. Required to maintain the transcriptionally repressive state of homeotic genes throughout development. The PR-DUB complex has weak or no activity toward 'Lys-48'- and 'Lys-63'-linked polyubiquitin chains. Polycomb group (PcG) protein. This chain is Ubiquitin carboxyl-terminal hydrolase calypso, found in Drosophila sechellia (Fruit fly).